We begin with the raw amino-acid sequence, 249 residues long: Phycobilisome 27.9 kDa linker polypeptide, phycoerythrin-associated, rod (249 aa).

The PBS-linker domain occupies 2–166 (ASQTILELWP…LDRGPAQIDS (165 aa)). A CpcD-like domain is found at 198-248 (EKRFKILVQGSKFDSPRRISTTEYIVPASKMTPQIQRINRTSGKIVSITEI).

This sequence belongs to the phycobilisome linker protein family. As to quaternary structure, the phycobilisome is a hemidiscoidal structure that is composed of two distinct substructures: a core complex and six rods radiating from the core.

Its subcellular location is the cellular thylakoid membrane. Its function is as follows. Rod linker protein, associated with phycoerythrin. Linker polypeptides determine the state of aggregation and the location of the disk-shaped phycobiliprotein units within the phycobilisome and modulate their spectroscopic properties in order to mediate a directed and optimal energy transfer. This Microchaete diplosiphon (Fremyella diplosiphon) protein is Phycobilisome 27.9 kDa linker polypeptide, phycoerythrin-associated, rod (cpeD).